A 150-amino-acid polypeptide reads, in one-letter code: UPF0260 protein PP_4587 (150 aa).

The protein belongs to the UPF0260 family.

The polypeptide is UPF0260 protein PP_4587 (Pseudomonas putida (strain ATCC 47054 / DSM 6125 / CFBP 8728 / NCIMB 11950 / KT2440)).